Consider the following 355-residue polypeptide: Peptide chain release factor 1 (355 aa).

An N5-methylglutamine modification is found at glutamine 233.

This sequence belongs to the prokaryotic/mitochondrial release factor family. Post-translationally, methylated by PrmC. Methylation increases the termination efficiency of RF1.

It is found in the cytoplasm. Its function is as follows. Peptide chain release factor 1 directs the termination of translation in response to the peptide chain termination codons UAG and UAA. This Desulfitobacterium hafniense (strain DSM 10664 / DCB-2) protein is Peptide chain release factor 1.